The primary structure comprises 203 residues: Small ribosomal subunit protein uS4 (203 aa).

Residues 93-156 (RRLDNVVYRL…LKVPAILEAV (64 aa)) form the S4 RNA-binding domain.

This sequence belongs to the universal ribosomal protein uS4 family. In terms of assembly, part of the 30S ribosomal subunit. Contacts protein S5. The interaction surface between S4 and S5 is involved in control of translational fidelity.

Functionally, one of the primary rRNA binding proteins, it binds directly to 16S rRNA where it nucleates assembly of the body of the 30S subunit. Its function is as follows. With S5 and S12 plays an important role in translational accuracy. This Streptococcus pneumoniae serotype 2 (strain D39 / NCTC 7466) protein is Small ribosomal subunit protein uS4.